The primary structure comprises 204 residues: ATP synthase subunit b 2 (204 aa).

The disordered stretch occupies residues 8–28 (AQSSTTEGAEAHDAAAAGEVH). A helical membrane pass occupies residues 56–76 (LLWLAITFGLFYLLMSKVIIP).

The protein belongs to the ATPase B chain family. As to quaternary structure, F-type ATPases have 2 components, F(1) - the catalytic core - and F(0) - the membrane proton channel. F(1) has five subunits: alpha(3), beta(3), gamma(1), delta(1), epsilon(1). F(0) has three main subunits: a(1), b(2) and c(10-14). The alpha and beta chains form an alternating ring which encloses part of the gamma chain. F(1) is attached to F(0) by a central stalk formed by the gamma and epsilon chains, while a peripheral stalk is formed by the delta and b chains.

It is found in the cell inner membrane. In terms of biological role, f(1)F(0) ATP synthase produces ATP from ADP in the presence of a proton or sodium gradient. F-type ATPases consist of two structural domains, F(1) containing the extramembraneous catalytic core and F(0) containing the membrane proton channel, linked together by a central stalk and a peripheral stalk. During catalysis, ATP synthesis in the catalytic domain of F(1) is coupled via a rotary mechanism of the central stalk subunits to proton translocation. Its function is as follows. Component of the F(0) channel, it forms part of the peripheral stalk, linking F(1) to F(0). The b'-subunit is a diverged and duplicated form of b found in plants and photosynthetic bacteria. This chain is ATP synthase subunit b 2 (atpF2), found in Rhizobium meliloti (strain 1021) (Ensifer meliloti).